The sequence spans 768 residues: Histone-lysine N-methyltransferase, H3 lysine-36 specific (768 aa).

Residues 45–90 form the AWS domain; the sequence is AEVMACDCKPGPTACDEDSGCINRLTSIECVRCCKGCQNKRFQGKK. The SET domain occupies 92 to 209; sequence ASVDVISTEK…RGEEVTFDYN (118 aa). Residues 216 to 232 enclose the Post-SET domain; the sequence is EAQACYCGEKNCVGFLG. The segment covering 411-452 has biased composition (basic and acidic residues); sequence KIDPDGDEHSVSRGTSEEVTKESSKSEEPNDVEVVKVNKKAD. Disordered regions lie at residues 411–508, 533–610, and 680–768; these read KIDP…KGWQ, KASR…VNAQ, and VVKR…IDLE. The span at 453 to 469 shows a compositional bias: polar residues; that stretch reads NNGNGVTDSPSTRSESP. The region spanning 501 to 534 is the WW domain; the sequence is RSLPKGWQFANDPQGKVYYYNLELNIQQWDFPKA. 3 stretches are compositionally biased toward basic and acidic residues: residues 555 to 568, 682 to 734, and 755 to 768; these read NRRD…ETRE, KRLE…KGEE, and TVKK…IDLE.

The protein belongs to the class V-like SAM-binding methyltransferase superfamily. Histone-lysine methyltransferase family. SET2 subfamily.

It localises to the nucleus. The protein localises to the chromosome. The enzyme catalyses L-lysyl(36)-[histone H3] + 3 S-adenosyl-L-methionine = N(6),N(6),N(6)-trimethyl-L-lysyl(36)-[histone H3] + 3 S-adenosyl-L-homocysteine + 3 H(+). Histone methyltransferase that trimethylates histone H3 'Lys-36' forming H3K36me3. Involved in transcription elongation as well as in transcription repression. The polypeptide is Histone-lysine N-methyltransferase, H3 lysine-36 specific (set-2) (Yarrowia lipolytica (strain CLIB 122 / E 150) (Yeast)).